The sequence spans 205 residues: Large ribosomal subunit protein uL4 (205 aa).

It belongs to the universal ribosomal protein uL4 family. Part of the 50S ribosomal subunit.

One of the primary rRNA binding proteins, this protein initially binds near the 5'-end of the 23S rRNA. It is important during the early stages of 50S assembly. It makes multiple contacts with different domains of the 23S rRNA in the assembled 50S subunit and ribosome. Functionally, forms part of the polypeptide exit tunnel. The protein is Large ribosomal subunit protein uL4 of Dinoroseobacter shibae (strain DSM 16493 / NCIMB 14021 / DFL 12).